A 148-amino-acid chain; its full sequence is NADH-quinone oxidoreductase subunit C (148 aa).

This sequence belongs to the complex I 30 kDa subunit family. In terms of assembly, NDH-1 is composed of 14 different subunits. Subunits NuoB, C, D, E, F, and G constitute the peripheral sector of the complex.

The protein localises to the cell membrane. The enzyme catalyses a quinone + NADH + 5 H(+)(in) = a quinol + NAD(+) + 4 H(+)(out). NDH-1 shuttles electrons from NADH, via FMN and iron-sulfur (Fe-S) centers, to quinones in the respiratory chain. The immediate electron acceptor for the enzyme in this species is believed to be a menaquinone. Couples the redox reaction to proton translocation (for every two electrons transferred, four hydrogen ions are translocated across the cytoplasmic membrane), and thus conserves the redox energy in a proton gradient. The sequence is that of NADH-quinone oxidoreductase subunit C from Moorella thermoacetica (strain ATCC 39073 / JCM 9320).